The following is a 723-amino-acid chain: MSDQKAITSEQEMKAYRVQGFTCANCAGKFEKNVKQLSGVEDAKVNFGASKIAVYGNATIEELEKAGAFENLKVTPEKSARQASQEVKEDTKEDKVPFYKKHSTLLYASLLIAFGYLSSYVNGEENIVTTLLFLASMFIGGLSLFKVGLQNLLRFEFDMKTLMTVAVIGGAIIGEWAEVAIVVILFAISEALERFSMDRARQSIRSLMDIAPKEALVKRNGQEIMIHVDDIAVGDIMIVKPGQKIAMDGVVVSGYSAVNQAAITGESVPVEKTVDNEVFAGTLNEEGLLEVEITKLVEDTTISKIIHLVEEAQGERAPSQAFVDKFAKYYTPIIMIIAALVAIVPPLFFDGSWETWIYQGLAVLVVGCPCALVISTPISIVSAIGNAAKKGVLVKGGVYLEEMGALKAIAFDKTGTLTKGVPAVTDYNVLNKQINEKELLSIITALEYRSQHPLASAIMKKAEEENITYSDVQVEDFSSITGKGIKGIVNGTTYYIGSPKLFKELLTNDFDKDLEQNVTTLQNQGKTAMIIGTEKEILAVIAVADEVRESSKEILQKLHQLGIKKTIMLTGDNKGTANAIGGQVGVSDIEAELMPQDKLDFIKQLRSEYGNVAMVGDGVNDAPALAASTVGIAMGGAGTDTALETADVALMGDDLRKLPFTVKLSRKTLNIIKANITFAIAIKFIALLLVIPGWLTLWIAILSDMGATLLVALNGLRLMRVKE.

The HMA domain occupies 12-75 (EMKAYRVQGF…AGAFENLKVT (64 aa)). The Cd(2+) site is built by C23 and C26. A run of 5 helical transmembrane segments spans residues 103–123 (STLL…YVNG), 127–147 (IVTT…LFKV), 168–188 (IGGA…LFAI), 329–349 (YYTP…PLFF), and 361–381 (LAVL…ISIV). The 4-aspartylphosphate intermediate role is filled by D412. Transmembrane regions (helical) follow at residues 671 to 690 (IIKA…LLLV) and 694 to 716 (WLTL…LNGL).

It belongs to the cation transport ATPase (P-type) (TC 3.A.3) family. Type IB subfamily.

Its subcellular location is the cell membrane. It catalyses the reaction Cd(2+)(in) + ATP + H2O = Cd(2+)(out) + ADP + phosphate + H(+). In terms of biological role, couples the hydrolysis of ATP with the export of cadmium. This is Probable cadmium-transporting ATPase (cadA) from Alkalihalophilus pseudofirmus (strain ATCC BAA-2126 / JCM 17055 / OF4) (Bacillus pseudofirmus).